A 237-amino-acid polypeptide reads, in one-letter code: Pyridoxal 5'-phosphate synthase subunit PdxS (237 aa).

Catalysis depends on Lys-19, which acts as the Schiff-base intermediate with D-ribose 5-phosphate. Gly-91 contributes to the D-ribose 5-phosphate binding site. Arg-103 contributes to the D-glyceraldehyde 3-phosphate binding site. D-ribose 5-phosphate-binding positions include Gly-157 and 178–179; that span reads GS.

Belongs to the PdxS/SNZ family. In terms of assembly, in the presence of PdxT, forms a dodecamer of heterodimers.

The enzyme catalyses aldehydo-D-ribose 5-phosphate + D-glyceraldehyde 3-phosphate + L-glutamine = pyridoxal 5'-phosphate + L-glutamate + phosphate + 3 H2O + H(+). It functions in the pathway cofactor biosynthesis; pyridoxal 5'-phosphate biosynthesis. Catalyzes the formation of pyridoxal 5'-phosphate from ribose 5-phosphate (RBP), glyceraldehyde 3-phosphate (G3P) and ammonia. The ammonia is provided by the PdxT subunit. Can also use ribulose 5-phosphate and dihydroxyacetone phosphate as substrates, resulting from enzyme-catalyzed isomerization of RBP and G3P, respectively. The polypeptide is Pyridoxal 5'-phosphate synthase subunit PdxS (Methanococcus vannielii).